Consider the following 323-residue polypeptide: HPr kinase/phosphorylase (323 aa).

Residues His-142 and Lys-163 contribute to the active site. Gly-157–Ser-164 lines the ATP pocket. Residue Ser-164 coordinates Mg(2+). The active-site Proton acceptor; for phosphorylation activity. Proton donor; for dephosphorylation activity is the Asp-181. Residues Leu-205–Asn-214 form an important for the catalytic mechanism of both phosphorylation and dephosphorylation region. Mg(2+) is bound at residue Glu-206. The active site involves Arg-249. The important for the catalytic mechanism of dephosphorylation stretch occupies residues Pro-270–Arg-275.

This sequence belongs to the HPrK/P family. As to quaternary structure, homohexamer. Mg(2+) serves as cofactor.

It carries out the reaction [HPr protein]-L-serine + ATP = [HPr protein]-O-phospho-L-serine + ADP + H(+). The enzyme catalyses [HPr protein]-O-phospho-L-serine + phosphate + H(+) = [HPr protein]-L-serine + diphosphate. Its function is as follows. Catalyzes the ATP- as well as the pyrophosphate-dependent phosphorylation of a specific serine residue in HPr, a phosphocarrier protein of the phosphoenolpyruvate-dependent sugar phosphotransferase system (PTS). HprK/P also catalyzes the pyrophosphate-producing, inorganic phosphate-dependent dephosphorylation (phosphorolysis) of seryl-phosphorylated HPr (P-Ser-HPr). In Nitrosomonas europaea (strain ATCC 19718 / CIP 103999 / KCTC 2705 / NBRC 14298), this protein is HPr kinase/phosphorylase.